The sequence spans 426 residues: Serine--tRNA ligase (426 aa).

230-232 (TSE) lines the L-serine pocket. 261 to 263 (RSE) is a binding site for ATP. Glu-284 provides a ligand contact to L-serine. 348-351 (EISS) contributes to the ATP binding site. An L-serine-binding site is contributed by Ser-384.

It belongs to the class-II aminoacyl-tRNA synthetase family. Type-1 seryl-tRNA synthetase subfamily. In terms of assembly, homodimer. The tRNA molecule binds across the dimer.

It localises to the cytoplasm. It catalyses the reaction tRNA(Ser) + L-serine + ATP = L-seryl-tRNA(Ser) + AMP + diphosphate + H(+). It carries out the reaction tRNA(Sec) + L-serine + ATP = L-seryl-tRNA(Sec) + AMP + diphosphate + H(+). It functions in the pathway aminoacyl-tRNA biosynthesis; selenocysteinyl-tRNA(Sec) biosynthesis; L-seryl-tRNA(Sec) from L-serine and tRNA(Sec): step 1/1. Its function is as follows. Catalyzes the attachment of serine to tRNA(Ser). Is also able to aminoacylate tRNA(Sec) with serine, to form the misacylated tRNA L-seryl-tRNA(Sec), which will be further converted into selenocysteinyl-tRNA(Sec). The sequence is that of Serine--tRNA ligase from Sphingopyxis alaskensis (strain DSM 13593 / LMG 18877 / RB2256) (Sphingomonas alaskensis).